Reading from the N-terminus, the 495-residue chain is Bile acid-sensitive ion channel (495 aa).

Positions 1–30 (MEHTEKSKGPAEKGLLGKIRRYLSKRPLPS) are binds the plasma membrane and stabilizes the channel in the closed state. Residues 1-61 (MEHTEKSKGP…NIAQNQNKVR (61 aa)) lie on the Cytoplasmic side of the membrane. A helical membrane pass occupies residues 62-82 (KVIWLSVVLGSVSLLVWQIYS). Residues 83–459 (RLVNYFMWPT…GLFCGASLIT (377 aa)) are Extracellular-facing. 6 disulfides stabilise this stretch: cysteine 112–cysteine 207, cysteine 185–cysteine 192, cysteine 298–cysteine 377, cysteine 315–cysteine 373, cysteine 328–cysteine 350, and cysteine 330–cysteine 342. N-linked (GlcNAc...) asparagine glycans are attached at residues asparagine 147 and asparagine 163. Asparagine 306 is a glycosylation site (N-linked (GlcNAc...) asparagine). Residues asparagine 370, asparagine 405, and asparagine 421 are each glycosylated (N-linked (GlcNAc...) asparagine). Positions 454–456 (GAS) match the GAS motif; ion selectivity filter motif. Residues 460 to 480 (IIEIIEYLFTSFYWVFIFFLL) traverse the membrane as a helical segment. Residues 481-495 (KILEMIQRTSPPQTV) lie on the Cytoplasmic side of the membrane.

It belongs to the amiloride-sensitive sodium channel (TC 1.A.6) family. ASIC5 subfamily. As to quaternary structure, forms homotrimeric channels. In terms of tissue distribution, expressed by cholangiocytes (at protein level). Detected in brain, liver, duodenum, jejunum, ileum and testis.

The protein localises to the apical cell membrane. The protein resides in the cell membrane. It catalyses the reaction Na(+)(in) = Na(+)(out). The enzyme catalyses Li(+)(in) = Li(+)(out). It carries out the reaction K(+)(in) = K(+)(out). The catalysed reaction is H(+)(in) = H(+)(out). Inhibited by the diuretic drug amiloride. Inhibited by diminazene. Inhibited by extracellular Ca(2+). In terms of biological role, forms bile acid-gated sodium channels and may play a role in bile acid-dependent absorption and secretion by epithelial cells of the bile ducts. Displays high selectivity for sodium ions but can also permit the permeation of other cations. The gating could be indirect and the consequence of alterations of the membrane environment of the channel by bile acids. As a sodium channel of type II unipolar brush cells of the vestibulocerebellum, controlling the electrical activity of these cells, could play a role in motor coordination and balance. In Rattus norvegicus (Rat), this protein is Bile acid-sensitive ion channel.